Consider the following 601-residue polypeptide: Glutamine--fructose-6-phosphate aminotransferase [isomerizing] (601 aa).

Cys2 functions as the Nucleophile; for GATase activity in the catalytic mechanism. A Glutamine amidotransferase type-2 domain is found at 2–218 (CGIVGYIGYD…DHEIVIVKKD (217 aa)). 2 SIS domains span residues 284 to 423 (IIND…EHGR) and 453 to 591 (IATD…VDKP). Residue Lys596 is the For Fru-6P isomerization activity of the active site.

Homodimer.

Its subcellular location is the cytoplasm. The enzyme catalyses D-fructose 6-phosphate + L-glutamine = D-glucosamine 6-phosphate + L-glutamate. In terms of biological role, catalyzes the first step in hexosamine metabolism, converting fructose-6P into glucosamine-6P using glutamine as a nitrogen source. The chain is Glutamine--fructose-6-phosphate aminotransferase [isomerizing] from Staphylococcus aureus (strain MRSA252).